The sequence spans 84 residues: Small ribosomal subunit protein bS18 (84 aa).

This sequence belongs to the bacterial ribosomal protein bS18 family. Part of the 30S ribosomal subunit. Forms a tight heterodimer with protein bS6.

Binds as a heterodimer with protein bS6 to the central domain of the 16S rRNA, where it helps stabilize the platform of the 30S subunit. The protein is Small ribosomal subunit protein bS18 of Mycobacterium leprae (strain Br4923).